We begin with the raw amino-acid sequence, 495 residues long: Homeobox protein ceh-21 (495 aa).

Polar residues predominate over residues Met-1 to Ala-14. Disordered regions lie at residues Met-1 to Glu-24 and Thr-89 to Glu-267. Over residues Leu-106–Ser-120 the composition is skewed to basic and acidic residues. Over residues Asn-132 to Ala-145 the composition is skewed to acidic residues. Basic and acidic residues predominate over residues Ser-149–Glu-162. Composition is skewed to polar residues over residues Ser-163–Lys-179 and Thr-199–Ala-217. Over residues Ser-218 to Ser-233 the composition is skewed to low complexity. Residues Arg-242–Pro-254 show a composition bias toward basic and acidic residues. Positions Asn-284–Lys-370 form a DNA-binding region, CUT. The segment at residues Lys-389 to Asp-449 is a DNA-binding region (homeobox). Residues Gln-450–Asp-473 are disordered. Acidic residues predominate over residues Asp-464–Asp-473.

It belongs to the CUT homeobox family.

The protein resides in the nucleus. Probable DNA-binding regulatory protein involved in cell-fate specification. The sequence is that of Homeobox protein ceh-21 (ceh-21) from Caenorhabditis elegans.